The following is a 268-amino-acid chain: Myeloid leukemia factor 1 (268 aa).

Phosphoserine is present on residues S8, S32, and S34. Disordered stretches follow at residues 44-66 (ISDG…SLTH) and 209-268 (GRHN…SNKK). The segment at 50-125 (RAHNRRGHND…IGDEPPKVFQ (76 aa)) is interaction with COPS3. Composition is skewed to basic and acidic residues over residues 56-65 (GHNDGEDSLT) and 226-237 (PGSRELKRREKP).

It belongs to the MLF family. As to quaternary structure, interacts with CENPU. Also interacts with NRBP1/MADM, YWHAZ/14-3-3-zeta and HNRPUL2/MANP. NRBP1 recruits a serine kinase which phosphorylates both itself and MLF1. Phosphorylated MLF1 then binds to YWHAZ and is retained in the cytoplasm. Retained in the nucleus by binding to HNRPUL2. Binds to COPS3/CSN3 which is required for suppression of COP1 and activation of p53. Post-translationally, phosphorylation is required for binding to YWHAZ. In terms of tissue distribution, most abundant in testis, ovary, skeletal muscle, heart, kidney and colon. Low expression in spleen, thymus and peripheral blood leukocytes.

The protein localises to the cytoplasm. Its subcellular location is the nucleus. It is found in the cell projection. It localises to the cilium. The protein resides in the cytoskeleton. The protein localises to the cilium basal body. Its function is as follows. Involved in lineage commitment of primary hemopoietic progenitors by restricting erythroid formation and enhancing myeloid formation. Interferes with erythropoietin-induced erythroid terminal differentiation by preventing cells from exiting the cell cycle through suppression of CDKN1B/p27Kip1 levels. Suppresses COP1 activity via CSN3 which activates p53 and induces cell cycle arrest. Binds DNA and affects the expression of a number of genes so may function as a transcription factor in the nucleus. The protein is Myeloid leukemia factor 1 (MLF1) of Homo sapiens (Human).